The primary structure comprises 625 residues: Baeyer-Villiger monooxygenase ATR8 (625 aa).

FAD contacts are provided by residues Asp-112, 120 to 123 (TWYW), Asp-132, and Tyr-138. Position 130–132 (130–132 (QCD)) interacts with NADP(+). Residues 266–272 (TGATAIQ), 289–290 (RT), and 405–406 (KR) each bind NADP(+).

This sequence belongs to the FAD-binding monooxygenase family. It depends on FAD as a cofactor.

It participates in mycotoxin biosynthesis. Functionally, baeyer-Villiger monooxygenase; part of the core atranone cluster (CAC) which products are predicted to catalyze most or all steps of mycotoxin atranone synthesis, starting from geranylgeranyl pyrophosphate (GGPP). The initial cyclization of GGPP to dolabellane is probably performed by the terpene cyclase ATR13. The Baeyer-Villiger oxidation near the end of the atranone synthesis, which converts atranones D and E to atranones F and G is predicted to be catalyzed by the monooxygenase ATR8. Of the CAC's other predicted gene products, the reducing PKS ATR6 might synthesize a polyketide chain. This polyketide is probably transferred onto the atranone backbone by the polyketide transferase ATR5. Other predicted CAC products include 4 oxygenases (ATR2, ATR3, ATR4, and ATR14), 3 short-chain reductases (ATR7, ATR9, and ATR10), and a methyltransferase (ATR12). These may all be involved in the various steps of atranone biosynthesis, although their specific roles must await experimental determination. The polypeptide is Baeyer-Villiger monooxygenase ATR8 (Stachybotrys chlorohalonatus (strain IBT 40285)).